The following is a 448-amino-acid chain: Trigger factor (448 aa).

Residues 160 to 245 (GDMLLMKVES…IQEIREEKLP (86 aa)) form the PPIase FKBP-type domain.

Belongs to the FKBP-type PPIase family. Tig subfamily.

The protein localises to the cytoplasm. It carries out the reaction [protein]-peptidylproline (omega=180) = [protein]-peptidylproline (omega=0). Its function is as follows. Involved in protein export. Acts as a chaperone by maintaining the newly synthesized protein in an open conformation. Functions as a peptidyl-prolyl cis-trans isomerase. This Dehalococcoides mccartyi (strain ATCC BAA-2266 / KCTC 15142 / 195) (Dehalococcoides ethenogenes (strain 195)) protein is Trigger factor.